Reading from the N-terminus, the 338-residue chain is Ornithine carbamoyltransferase (338 aa).

Residues arginine 116 and 143–146 (HPCQ) each bind carbamoyl phosphate. Residues asparagine 174, aspartate 235, and 239–240 (SM) contribute to the L-ornithine site. Residues cysteine 275 and arginine 303 each coordinate carbamoyl phosphate.

The protein belongs to the aspartate/ornithine carbamoyltransferase superfamily. OTCase family.

It localises to the cytoplasm. It carries out the reaction carbamoyl phosphate + L-ornithine = L-citrulline + phosphate + H(+). It functions in the pathway amino-acid biosynthesis; L-arginine biosynthesis; L-arginine from L-ornithine and carbamoyl phosphate: step 1/3. Reversibly catalyzes the transfer of the carbamoyl group from carbamoyl phosphate (CP) to the N(epsilon) atom of ornithine (ORN) to produce L-citrulline. The sequence is that of Ornithine carbamoyltransferase from Chlorobaculum tepidum (strain ATCC 49652 / DSM 12025 / NBRC 103806 / TLS) (Chlorobium tepidum).